The sequence spans 475 residues: Tubulin gamma-1 chain (475 aa).

142-148 (AGGTGSG) is a GTP binding site. A disordered region spans residues 453-475 (VKRGNGPVDSKSEDSRSVTSAGS).

This sequence belongs to the tubulin family. Interacts with Ote.

The protein resides in the cytoplasm. Its subcellular location is the cytoskeleton. The protein localises to the microtubule organizing center. It localises to the centrosome. It is found in the perinuclear region. In terms of biological role, tubulin is the major constituent of microtubules. The gamma chain is found at microtubule organizing centers (MTOC) such as the spindle poles or the centrosome, suggesting that it is involved in the minus-end nucleation of microtubule assembly. This Drosophila melanogaster (Fruit fly) protein is Tubulin gamma-1 chain (gammaTub23C).